Reading from the N-terminus, the 92-residue chain is Phosphoribosyl-ATP pyrophosphatase (92 aa).

Belongs to the PRA-PH family.

The protein resides in the cytoplasm. The catalysed reaction is 1-(5-phospho-beta-D-ribosyl)-ATP + H2O = 1-(5-phospho-beta-D-ribosyl)-5'-AMP + diphosphate + H(+). The protein operates within amino-acid biosynthesis; L-histidine biosynthesis; L-histidine from 5-phospho-alpha-D-ribose 1-diphosphate: step 2/9. The sequence is that of Phosphoribosyl-ATP pyrophosphatase from Leptospira borgpetersenii serovar Hardjo-bovis (strain JB197).